Here is a 209-residue protein sequence, read N- to C-terminus: Egg case collagen (209 aa).

A nonhelical region region spans residues 1 to 129; sequence VYMSGXGKPP…YKGNHGFYLV (129 aa). Positions 130–209 are triple-helical region; sequence LPAGYPGTPG…DPGLPGEYGV (80 aa). Residues 138–209 are disordered; that stretch reads PGTPGPRGGP…DPGLPGEYGV (72 aa). Gly residues predominate over residues 142 to 162; that stretch reads GPRGGPGDPGMPGEPGVGFPG.

Its function is as follows. Major component of the egg case wall which is secreted by the oviduct. The egg case combines mechanical strength and toughness with high permeability to small molecules and ions. The sequence is that of Egg case collagen from Scyliorhinus canicula (Small-spotted catshark).